A 107-amino-acid polypeptide reads, in one-letter code: Iron-sulfur cluster assembly protein CyaY (107 aa).

This sequence belongs to the frataxin family.

Functionally, involved in iron-sulfur (Fe-S) cluster assembly. May act as a regulator of Fe-S biogenesis. The polypeptide is Iron-sulfur cluster assembly protein CyaY (Yersinia intermedia).